Reading from the N-terminus, the 249-residue chain is ATP synthase subunit a (249 aa).

Transmembrane regions (helical) follow at residues 33 to 53, 83 to 103, 113 to 133, 139 to 159, 188 to 208, and 216 to 236; these read YMLI…AQLV, FFPL…IGII, LIVT…YGVA, FFSI…VMFI, VFAG…WVGG, and VALY…FAIL.

It belongs to the ATPase A chain family. F-type ATPases have 2 components, CF(1) - the catalytic core - and CF(0) - the membrane proton channel. CF(1) has five subunits: alpha(3), beta(3), gamma(1), delta(1), epsilon(1). CF(0) has three main subunits: a(1), b(2) and c(9-12). The alpha and beta chains form an alternating ring which encloses part of the gamma chain. CF(1) is attached to CF(0) by a central stalk formed by the gamma and epsilon chains, while a peripheral stalk is formed by the delta and b chains.

It is found in the cell inner membrane. Functionally, key component of the proton channel; it plays a direct role in the translocation of protons across the membrane. The polypeptide is ATP synthase subunit a (Bradyrhizobium diazoefficiens (strain JCM 10833 / BCRC 13528 / IAM 13628 / NBRC 14792 / USDA 110)).